Here is a 485-residue protein sequence, read N- to C-terminus: MFS-type transporter phm3 (485 aa).

The disordered stretch occupies residues 1–22 (MSLQDPTKEHNNTSPSPKDEKT). Helical transmembrane passes span 55–75 (FTLY…LLVA), 83–103 (IVAS…PFLL), 113–133 (LWLY…CALS), 144–164 (FICG…IADL), 175–195 (ALFG…GGFV), 203–223 (WTFY…AVIM), 278–298 (PIVL…YLLF), 317–337 (GLAF…FAIL), 357–377 (LVLM…YGWS), 384–404 (WIVP…ILMP), 421–441 (ALAV…LAGP), and 449–469 (LGWG…VPFV).

The protein belongs to the major facilitator superfamily.

Its subcellular location is the cell membrane. Functionally, MFS-type transporter; part of the gene cluster that mediates the biosynthesis of the trans-fused decalin-containing tetramic acid phomasetin. This chain is MFS-type transporter phm3, found in Pyrenochaetopsis sp.